A 79-amino-acid chain; its full sequence is Acyl carrier protein (79 aa).

Residues 2–77 (SDTAERVKKI…DAIDFINQKT (76 aa)) form the Carrier domain. S37 carries the O-(pantetheine 4'-phosphoryl)serine modification.

This sequence belongs to the acyl carrier protein (ACP) family. In terms of processing, 4'-phosphopantetheine is transferred from CoA to a specific serine of apo-ACP by AcpS. This modification is essential for activity because fatty acids are bound in thioester linkage to the sulfhydryl of the prosthetic group.

It localises to the cytoplasm. It participates in lipid metabolism; fatty acid biosynthesis. Carrier of the growing fatty acid chain in fatty acid biosynthesis. This chain is Acyl carrier protein, found in Rhodospirillum centenum (strain ATCC 51521 / SW).